Here is a 122-residue protein sequence, read N- to C-terminus: Nodulation protein NolR (122 aa).

The 95-residue stretch at 15 to 109 (EKHEDAEIAA…ALSDIYGDDT (95 aa)) folds into the HTH arsR-type domain. A DNA-binding region (H-T-H motif) is located at residues 49-68 (VGALAHKVGLSQSALSQHLS).

In terms of assembly, binds to the operator site in homodimeric form.

Negative transacting factor controlling the nod regulon. May control the expression of nodD1, nodD2, nodD3 and nodABC genes. The protein is Nodulation protein NolR (nolR) of Rhizobium meliloti (Ensifer meliloti).